The following is an 882-amino-acid chain: Translation initiation factor IF-2 (882 aa).

The disordered stretch occupies residues 28 to 296 (GIRKSADDSV…LQQGFQKPAQ (269 aa)). A compositionally biased stretch (polar residues) spans 67 to 81 (STLNIPGTGGKSKSV). The span at 92–209 (VKRDPQEAER…RMAEENKWTD (118 aa)) shows a compositional bias: basic and acidic residues. The segment covering 244–258 (GRGRNAKAARPKKGN) has biased composition (basic residues). Residues 259–272 (KHAESKADREEARA) are compositionally biased toward basic and acidic residues. The region spanning 381 to 550 (PRAPVVTIMG…LLQAEVLELK (170 aa)) is the tr-type G domain. Positions 390–397 (GHVDHGKT) are G1. Residue 390-397 (GHVDHGKT) coordinates GTP. Positions 415 to 419 (GITQH) are G2. Residues 436 to 439 (DTPG) form a G3 region. GTP contacts are provided by residues 436-440 (DTPGH) and 490-493 (NKID). Residues 490–493 (NKID) form a G4 region. The segment at 526 to 528 (SAK) is G5. Residue lysine 800 is modified to N6-acetyllysine.

The protein belongs to the TRAFAC class translation factor GTPase superfamily. Classic translation factor GTPase family. IF-2 subfamily.

It is found in the cytoplasm. One of the essential components for the initiation of protein synthesis. Protects formylmethionyl-tRNA from spontaneous hydrolysis and promotes its binding to the 30S ribosomal subunits. Also involved in the hydrolysis of GTP during the formation of the 70S ribosomal complex. The polypeptide is Translation initiation factor IF-2 (Shigella boydii serotype 4 (strain Sb227)).